We begin with the raw amino-acid sequence, 512 residues long: Glycine betaine transporter OpuD (512 aa).

12 helical membrane-spanning segments follow: residues 5 to 25 (ISSV…WGVI), 45 to 65 (FGWY…FLIF), 82 to 102 (FGLL…GLVF), 135 to 155 (FFHW…CIAY), 186 to 206 (IDCI…GLGA), 222 to 242 (AFIV…LSAW), 257 to 277 (MVLA…VLIM), 312 to 332 (WTIF…IFIA), 343 to 363 (FLIG…SIFG), 395 to 415 (LTMV…ITSA), 441 to 461 (WGII…LAAL), and 464 to 484 (TAIL…ASLY).

It belongs to the BCCT transporter (TC 2.A.15) family.

It is found in the cell membrane. Its activity is regulated as follows. Activity is stimulated by high osmolarity. Functionally, high-affinity uptake of glycine betaine. Does not mediate either carnitine or choline uptake. This is Glycine betaine transporter OpuD (opuD) from Bacillus subtilis (strain 168).